The chain runs to 1433 residues: MDQELMDFFDFSKEFVRKQAPRGHVSSNVHAFVTESEELEKPIKREIVGKDYVKSFVEKEKERMNGIFSSDEMAPMRNKSLDDMDSDEEYEASPEIRTDAEFYEKYYFNLNRDKSLPIYAKREEIINAINENPVVIVKGETGCGKTTQVPQYILDEGFKSKQYCNIVVTQPRRIAAISIANRVCQERQWQRGTVCGYQVGLHRQLERFADTRLLYCTTGVLLNILVNNKTLTHYTHIVLDEVHERGQEMDFLLIVIRRLLATNSRHVKVILMSATINPRELSDYFANERSAPPVIDASYGRNFTVEKYYRDQLQTINWEGHQEDINSPGITQEGYRSAIKTILVIDNMERNERSTGKSYNQSLREGSILIFLPGVGEINNMSDMLKDMANHDSIMKFNMVRCHSLMSSDDQREIFQPSPPGYRKIIMATNVAESSITVPDVSYIIDFCLEKVLFTDTFTNFSSLRLVWASKTNCRQRAGRVGRLRNGRVYRMVTKSFYQRELSEYSVPEMLRSPLQNCVLKAKELKMGTPVEMLALALSPPNLSDICNTILLLKEVGALFPTVDGTYDPCDGDITYWGTIMSKLPLDTRLSRLIILGYIFNLLDEAIIIAAGLTVRGIFVDSTRLGSDNYWMHYVFADGSGSDLVGIWRVYLTYLNMCENGLQKDASIQWAKRFHLSLRALSEMNLLVLDLRLRCEKLSLLPLNFPISRISDDSEKAIMLKVIIAGSFYPNYFVQSKSTSGDDRNMFSVISGLDPCRTVYFTSFTDRTMGELYTRKVKQLFPETQIPPENMDVTFGQGSEKIFVTFKNDIYKPEGTTYVHVPGRIKAEVYKALRLRTYCNHHSLRVMEPMSALKYVKDKKIGKVVEGRWIPPSKPVAVELLALPSVFDKIIVGRITNIVSCGKFFFQPESFENCIANMSEHFNNPQQLQNCVRNAGAITKGLMLLAKRQGKYQRATVVRVDTQNSSNVRFYVRFVDYGDIERLPMTQLRLMSQDLLRHYRDLPPRLFECRLALVQPASMVSTYNAWPQKADDMLHALAKGGRVQLEIYSLVQNVAAVMIHLREGNLNELLVKEKLARRTNEDYMSRVDHDFRMRKQECRGYVSQQERQQVNEEYLRSKQLPQDMDLSPPPPQECKSLIILKGPFSTLESTVFSTMQSGMSKTVRIDPCSVNFVLLDTEPQDQHAKMVVAASISSAGRHNDVLTLRSTSIMPNIPGFAAIMTLIFCPRAQLNANTANSRYVSILAGLGYHPQTMKSYYEDHDLVINLDVNIDEHDVLLINQIRYMMDSVFFNLEGELRPIAGHADRVLIHDTIYRALNRLLSKNRNFIVCNPKSSDYVWQDMEESGEPDPQPYGRRSIFPMHTIPELHEENMDTVLDLIANCKEMYDYRNFEGSFDPMTCRLCKQYLESVSELRLHLLTQLHLDREKEVGYPMD.

One can recognise a Helicase ATP-binding domain in the interval 126 to 294 (INAINENPVV…FANERSAPPV (169 aa)). 139-146 (GETGCGKT) contributes to the ATP binding site. The DEAH box signature appears at 240-243 (DEVH). Residues 355–526 (TGKSYNQSLR…NCVLKAKELK (172 aa)) enclose the Helicase C-terminal domain. A Tudor domain is found at 935 to 998 (AGAITKGLML…RLMSQDLLRH (64 aa)).

This sequence belongs to the DEAD box helicase family. DEAH subfamily.

The protein localises to the cytoplasm. The catalysed reaction is ATP + H2O = ADP + phosphate + H(+). Functionally, probable ATP-binding RNA helicase which plays a central role during spermatogenesis and oogenesis by repressing transposable elements and preventing their mobilization, which is essential for the germline integrity. Acts via the piRNA metabolic process, which mediates the repression of transposable elements during meiosis by forming complexes composed of piRNAs and Piwi and govern the methylation and subsequent repression of transposons. Involved in the repression of LTR retrotransposon copia. Also involved in telomere regulation by repressing specialized telomeric retroelements HeT-A, TAHRE, and TART; Drosophila telomeres being maintained by transposition of specialized telomeric retroelements. Involved in telomeric trans-silencing, a repression mechanism by which a transposon or a transgene inserted in subtelomeric heterochromatin has the capacity to repress in trans in the female germline, a homologous transposon, or transgene located in euchromatin. Involved in the repression of testis-expressed Stellate genes by the homologous Su(Ste) repeats. Required for anteroposterior and dorsoventral axis formation during oogenesis. The chain is Probable ATP-dependent RNA helicase spindle-E (spn-E) from Drosophila pseudoobscura pseudoobscura (Fruit fly).